Here is a 980-residue protein sequence, read N- to C-terminus: Glutamate receptor ionotropic, kainate 5 (980 aa).

An N-terminal signal peptide occupies residues 1–14 (MPAELLLLLIVAFA). Over 15-544 (SPSCQVLSSL…YFSFLDPFSP (530 aa)) the chain is Extracellular. Intrachain disulfides connect Cys36–Cys292, Cys83–Cys334, and Cys165–Cys170. N-linked (GlcNAc...) asparagine glycosylation is found at Asn219, Asn271, Asn285, Asn322, Asn372, Asn394, Asn400, Asn407, Asn414, and Asn478. Residues 545-565 (AVWLFMLLAYLAVSCVLFLAA) traverse the membrane as a helical segment. Over 566–622 (RLSPYEWYNPHPCLRARPHILENQYTLGNSLWFPVGGFMQQGSEIMPRALSTRCVSG) the chain is Cytoplasmic. A helical membrane pass occupies residues 623–643 (VWWAFTLIIISSYTANLAAFL). Over 644-803 (TVQRMEVPVE…HRAKGLGMEN (160 aa)) the chain is Extracellular. N-linked (GlcNAc...) asparagine glycosylation occurs at Asn735. Residues 804–824 (IGGIFIVLICGLIIAVFVAVM) form a helical membrane-spanning segment. Topologically, residues 825 to 980 (EFIWSTRRSA…AGPRELAEHE (156 aa)) are cytoplasmic. 2 disordered regions span residues 891–927 (YSAG…PTPC) and 944–980 (ASGA…AEHE). Residues 894-903 (GAGGDAGSAH) are compositionally biased toward gly residues.

Belongs to the glutamate-gated ion channel (TC 1.A.10.1) family. GRIK5 subfamily. In terms of assembly, homotetramer. Heterotetramer with GRIK2. Can form functional heteromeric receptors with GRIK1 and GRIK2. Can form functional heteromeric receptors with GRIK3.

The protein resides in the cell membrane. The protein localises to the postsynaptic cell membrane. It localises to the presynaptic cell membrane. Ionotropic glutamate receptor that functions as a cation-permeable ligand-gated ion channel, gated by L-glutamate and the glutamatergic agonist kainic acid. Cannot form functional channels on its own and produces channel activity only in heteromeric assembly with GRIK1 and GRIK2 subunits. Can form functional heteromeric receptors with GRIK3. This chain is Glutamate receptor ionotropic, kainate 5 (GRIK5), found in Homo sapiens (Human).